We begin with the raw amino-acid sequence, 140 residues long: uncharacterized protein (140 aa).

The HTH cro/C1-type domain maps to 26-80; that stretch reads IRSQRETAHVSMRQLAERSGVSNPYLSQVERGLRKPSADVLSQIAKALRVSAEVL. A DNA-binding region (H-T-H motif) is located at residues 37–56; sequence MRQLAERSGVSNPYLSQVER.

This is an uncharacterized protein from Mycobacterium tuberculosis (strain ATCC 25618 / H37Rv).